We begin with the raw amino-acid sequence, 251 residues long: MAIRVIPCLDVKDGRVVKGVNFVGLRDAGDPVELAAEYGRLGADEVTFLDISASTEGRATTREMVTRCAETVFVPLTVGGGVRGVDDVDVLLRAGADKVGVNTAAIAHPGMIDEVADRFGNQVIVLSVDARREPDRPSGFGVTTHGGTRSAGLDAVEWACQAVERGAGEILLNSMDADGTADGFDIEMIEAVRAAVDVPLIASGGAGKVADFVEAARAGVDAVLAASVFHYHTLTIAQIKDGLRHAGFEVR.

Residues aspartate 10 and aspartate 129 contribute to the active site.

The protein belongs to the HisA/HisF family. As to quaternary structure, heterodimer of HisH and HisF.

It is found in the cytoplasm. It catalyses the reaction 5-[(5-phospho-1-deoxy-D-ribulos-1-ylimino)methylamino]-1-(5-phospho-beta-D-ribosyl)imidazole-4-carboxamide + L-glutamine = D-erythro-1-(imidazol-4-yl)glycerol 3-phosphate + 5-amino-1-(5-phospho-beta-D-ribosyl)imidazole-4-carboxamide + L-glutamate + H(+). Its pathway is amino-acid biosynthesis; L-histidine biosynthesis; L-histidine from 5-phospho-alpha-D-ribose 1-diphosphate: step 5/9. Its function is as follows. IGPS catalyzes the conversion of PRFAR and glutamine to IGP, AICAR and glutamate. The HisF subunit catalyzes the cyclization activity that produces IGP and AICAR from PRFAR using the ammonia provided by the HisH subunit. The sequence is that of Imidazole glycerol phosphate synthase subunit HisF from Cutibacterium acnes (strain DSM 16379 / KPA171202) (Propionibacterium acnes).